The following is a 372-amino-acid chain: NAD(P)H-quinone oxidoreductase subunit 1 (372 aa).

9 helical membrane-spanning segments follow: residues 27–47 (LLWL…GVLV), 65–85 (PEYI…KLIF), 97–117 (WLFT…YIIV), 128–148 (LAMG…GLLM), 176–196 (LALA…VEIV), 204–224 (ILSW…IAAL), 254–274 (FALF…LVSV), 308–328 (VLGI…AILL), and 347–367 (FLLP…LAFP).

The protein belongs to the complex I subunit 1 family. In terms of assembly, NDH-1 is composed of at least 11 different subunits.

The protein resides in the cellular thylakoid membrane. It carries out the reaction a plastoquinone + NADH + (n+1) H(+)(in) = a plastoquinol + NAD(+) + n H(+)(out). The catalysed reaction is a plastoquinone + NADPH + (n+1) H(+)(in) = a plastoquinol + NADP(+) + n H(+)(out). In terms of biological role, NDH-1 shuttles electrons from an unknown electron donor, via FMN and iron-sulfur (Fe-S) centers, to quinones in the respiratory and/or the photosynthetic chain. The immediate electron acceptor for the enzyme in this species is believed to be plastoquinone. Couples the redox reaction to proton translocation, and thus conserves the redox energy in a proton gradient. The polypeptide is NAD(P)H-quinone oxidoreductase subunit 1 (Thermosynechococcus vestitus (strain NIES-2133 / IAM M-273 / BP-1)).